Consider the following 107-residue polypeptide: MISTTTHSVEGHEITDYVGIVNGEAIMGANVVRDFLAGISDVIGGRSAAYEDKLAEGRQIAVREMEDRAAQLGADAVVGVMLDFETLRDGMLMCVATGTAVKLRRRS.

The protein belongs to the UPF0145 family.

The polypeptide is UPF0145 protein BH1111 (Halalkalibacterium halodurans (strain ATCC BAA-125 / DSM 18197 / FERM 7344 / JCM 9153 / C-125) (Bacillus halodurans)).